Consider the following 336-residue polypeptide: Galactinol synthase 6 (336 aa).

The active site involves Lys106. Mn(2+) is bound by residues Asp122, Asp124, and His260.

This sequence belongs to the glycosyltransferase 8 family. Galactosyltransferase subfamily. The cofactor is a divalent metal cation.

It is found in the cytoplasm. The enzyme catalyses myo-inositol + UDP-alpha-D-galactose = alpha-D-galactosyl-(1-&gt;3)-1D-myo-inositol + UDP + H(+). Galactinol synthase involved in the biosynthesis of raffinose family oligosaccharides (RFOs) that function as osmoprotectants. May promote plant stress tolerance. The polypeptide is Galactinol synthase 6 (GOLS6) (Arabidopsis thaliana (Mouse-ear cress)).